The primary structure comprises 175 residues: Alkyl hydroperoxide reductase AhpD (175 aa).

The active-site Proton donor is the Cys131. A disulfide bridge links Cys131 with Cys134. Cys134 functions as the Cysteine sulfenic acid (-SOH) intermediate in the catalytic mechanism.

Belongs to the AhpD family.

The enzyme catalyses N(6)-[(R)-dihydrolipoyl]-L-lysyl-[lipoyl-carrier protein] + a hydroperoxide = N(6)-[(R)-lipoyl]-L-lysyl-[lipoyl-carrier protein] + an alcohol + H2O. Functionally, antioxidant protein with alkyl hydroperoxidase activity. Required for the reduction of the AhpC active site cysteine residues and for the regeneration of the AhpC enzyme activity. In Brucella melitensis biotype 1 (strain ATCC 23456 / CCUG 17765 / NCTC 10094 / 16M), this protein is Alkyl hydroperoxide reductase AhpD.